A 288-amino-acid polypeptide reads, in one-letter code: Fructokinase (288 aa).

An ATP-binding site is contributed by T131. Positions 154, 169, 172, and 175 each coordinate Zn(2+). ATP contacts are provided by residues P183 and 231 to 235 (GVMNQ).

The protein belongs to the ROK (NagC/XylR) family. Mg(2+) is required as a cofactor.

The catalysed reaction is D-fructose + ATP = D-fructose 6-phosphate + ADP + H(+). With respect to regulation, inhibition by zinc ions. This Pediococcus pentosaceus protein is Fructokinase (scrK).